The sequence spans 610 residues: UvrABC system protein C (610 aa).

One can recognise a GIY-YIG domain in the interval 13 to 91 (HLPGVYRMYD…IKENQPKYNV (79 aa)). One can recognise a UVR domain in the interval 201-236 (GQVVEHLVQKMENAAQELDFEAAARFRDQIQSVRAV).

This sequence belongs to the UvrC family. In terms of assembly, interacts with UvrB in an incision complex.

It is found in the cytoplasm. The UvrABC repair system catalyzes the recognition and processing of DNA lesions. UvrC both incises the 5' and 3' sides of the lesion. The N-terminal half is responsible for the 3' incision and the C-terminal half is responsible for the 5' incision. The sequence is that of UvrABC system protein C from Actinobacillus pleuropneumoniae serotype 7 (strain AP76).